Reading from the N-terminus, the 347-residue chain is Gentisate 1,2 dioxygenase 1 (347 aa).

One can recognise a Cupin type-2 domain in the interval L96 to D163.

Belongs to the gentisate 1,2-dioxygenase family. As to quaternary structure, homotetramer. Fe(2+) serves as cofactor.

The enzyme catalyses 2,5-dihydroxybenzoate + O2 = 3-maleylpyruvate + H(+). With respect to regulation, completely inhibited by the presence of 5 mM Cu(2+). Partially inhibited with 5 mM Mn(2+), Zn(2+) or EDTA. Functionally, involved in the degradation of gentisate. Catalyzes the conversion of gentisate (2,5-dihydroxybenzoate) to maleylpyruvate. Exhibits broad substrate specificities towards alkyl and halogenated gentisates. The protein is Gentisate 1,2 dioxygenase 1 of Aquipseudomonas alcaligenes (Pseudomonas alcaligenes).